Reading from the N-terminus, the 125-residue chain is Holo-[acyl-carrier-protein] synthase (125 aa).

Mg(2+) contacts are provided by Asp8 and Glu57.

Belongs to the P-Pant transferase superfamily. AcpS family. It depends on Mg(2+) as a cofactor.

The protein localises to the cytoplasm. The catalysed reaction is apo-[ACP] + CoA = holo-[ACP] + adenosine 3',5'-bisphosphate + H(+). Its function is as follows. Transfers the 4'-phosphopantetheine moiety from coenzyme A to a Ser of acyl-carrier-protein. In Nitrosospira multiformis (strain ATCC 25196 / NCIMB 11849 / C 71), this protein is Holo-[acyl-carrier-protein] synthase.